The following is a 157-amino-acid chain: Ribosomal RNA large subunit methyltransferase H (157 aa).

S-adenosyl-L-methionine is bound by residues L73, G105, and 124-129 (LSKMTF).

The protein belongs to the RNA methyltransferase RlmH family. Homodimer.

It is found in the cytoplasm. The catalysed reaction is pseudouridine(1915) in 23S rRNA + S-adenosyl-L-methionine = N(3)-methylpseudouridine(1915) in 23S rRNA + S-adenosyl-L-homocysteine + H(+). Functionally, specifically methylates the pseudouridine at position 1915 (m3Psi1915) in 23S rRNA. The chain is Ribosomal RNA large subunit methyltransferase H from Christiangramia forsetii (strain DSM 17595 / CGMCC 1.15422 / KT0803) (Gramella forsetii).